The primary structure comprises 509 residues: Meiotically up-regulated gene 157 protein (509 aa).

The next 5 membrane-spanning stretches (helical) occupy residues 4–24 (WQAILFFLFGIAFANNLNIPW), 140–160 (LATLILGAIQTQAEMLIQFPY), 296–316 (ACVLQYFIPANAMMVVELSHL), 368–388 (ILFMDDANVPSLLSLPYLGFV), and 417–437 (ISGIGGPHIGLRNVWPMSLIV).

It is found in the endoplasmic reticulum membrane. Functionally, has a role in meiosis. The protein is Meiotically up-regulated gene 157 protein (mug157) of Schizosaccharomyces pombe (strain 972 / ATCC 24843) (Fission yeast).